Consider the following 644-residue polypeptide: uncharacterized protein (644 aa).

The tract at residues 1-35 (MKANGLDNDPARTGMERTDIDSEHPEAQPLLNNNH) is disordered. Topologically, residues 1–90 (MKANGLDNDP…ILNILILINT (90 aa)) are cytoplasmic. Residues 14 to 26 (GMERTDIDSEHPE) are compositionally biased toward basic and acidic residues. Phosphoserine is present on residues Ser-22, Ser-56, and Ser-63. The chain crosses the membrane as a helical span at residues 91–111 (IWLVTTLISDFFFNINILFGF). The Vacuolar portion of the chain corresponds to 112–122 (SNRYASFNDLT). Residues 123-143 (LIFISIIANSFNLWFNKLGLY) form a helical membrane-spanning segment. Residues 144 to 147 (SALD) are Cytoplasmic-facing. A helical transmembrane segment spans residues 148–168 (YSLNVTLCVLTLFNLALTYLI). Topologically, residues 169–174 (KYTRQR) are vacuolar. A helical membrane pass occupies residues 175–195 (IGFVGTFTYLWTSFSFFIGAI). Residues 196–271 (LDWYLLFYNN…EWVSIGFRNT (76 aa)) are Cytoplasmic-facing. The segment at 225–251 (NENHTNSTENRDRSQYGSGSPTPTHRS) is disordered. Over residues 239-251 (QYGSGSPTPTHRS) the composition is skewed to polar residues. Ser-244 is subject to Phosphoserine. Residues 272–292 (IKFLILIFFALFTLNTLLTTL) traverse the membrane as a helical segment. Topologically, residues 293–644 (DTYRLTHKLP…IGELGKLTED (352 aa)) are vacuolar. Positions 348–619 (PIILFEHGGY…IVEGGHEIYK (272 aa)) constitute an AB hydrolase-1 domain. Residues 469–492 (GRGDGDDGDDGNGNDGDGRNHDKT) are disordered.

The protein localises to the vacuole membrane. This is an uncharacterized protein from Saccharomyces cerevisiae (strain ATCC 204508 / S288c) (Baker's yeast).